We begin with the raw amino-acid sequence, 206 residues long: CASP-like protein 4B2 (206 aa).

Low complexity-rich tracts occupy residues 1–12 and 24–36; these read MAMVPADADAAA and SSQNGAPNSAAAA. The disordered stretch occupies residues 1–42; the sequence is MAMVPADADAAAKPPPDVEKPDYSSQNGAPNSAAAAAGGGGG. The Cytoplasmic portion of the chain corresponds to 1 to 60; the sequence is MAMVPADADAAAKPPPDVEKPDYSSQNGAPNSAAAAAGGGGGGVVDSVVARWRREDMLDK. A helical membrane pass occupies residues 61-81; the sequence is SPLALHAAAAAFAFVALVLVA. The Extracellular segment spans residues 82–99; that stretch reads SNQHGDWMEFDRYQEYRY. A helical membrane pass occupies residues 100–120; sequence LLAIAALAFAYSLAQALRHAL. The Cytoplasmic portion of the chain corresponds to 121–138; sequence RMRRGVDPVPTASGRLLD. Residues 139–159 form a helical membrane-spanning segment; it reads FASDQVVAYLLMSALSAATPI. The Extracellular segment spans residues 160-174; that stretch reads TNRMRSAVINRFTDT. The helical transmembrane segment at 175–195 threads the bilayer; it reads TAAAISMAFLAFVSLALSAIV. Over 196–206 the chain is Cytoplasmic; sequence SGYKLSKQTYM.

This sequence belongs to the Casparian strip membrane proteins (CASP) family. In terms of assembly, homodimer and heterodimers.

It is found in the cell membrane. The protein is CASP-like protein 4B2 of Oryza sativa subsp. japonica (Rice).